Here is a 363-residue protein sequence, read N- to C-terminus: Protein-arginine kinase (363 aa).

The Phosphagen kinase C-terminal domain maps to 24–254 (IVLSSRIRLA…AQLIEQERSA (231 aa)). 27–31 (SSRIR) lines the ATP pocket. Residues Arg29, Arg40, and Arg86 each carry the phosphoarginine; by autocatalysis modification. Residues His92, Arg125, and 176–180 (RASVM) contribute to the ATP site. The residue at position 190 (Arg190) is a Phosphoarginine; by autocatalysis. ATP is bound at residue 207–212 (RGIYGE). Arg255, Arg269, and Arg272 each carry phosphoarginine; by autocatalysis. The short motif at 337-342 (RDIRRA) is the RDXXRA motif of the pArg binding pocket involved in allosteric regulation element. Arg346 carries the post-translational modification Phosphoarginine; by autocatalysis.

It belongs to the ATP:guanido phosphotransferase family. In terms of assembly, interacts with CtsR in its autophosphorylated form. Interacts with McsA in nonstressed as well as in heat-stressed cells, whereas strongly interacts with ClpC only in nonstressed cells. Post-translationally, autophosphorylated on Arg residues. Phosphorylation on Arg-40 and Arg-86 are up-regulated upon stress conditions.

It is found in the cytoplasm. The catalysed reaction is L-arginyl-[protein] + ATP = N(omega)-phospho-L-arginyl-[protein] + ADP + H(+). Appears to be allosterically activated by the binding of pArg-containing polypeptides to the pArg-binding pocket localized in the C-terminal domain of McsB. The McsB kinase is inhibited in nonstressed cells by direct interaction with ClpC; upon heat exposure, the interaction of McsB with ClpC is dramatically decreased, leading to McsB release and activation during heat stress. Its kinase activity is counteracted by the protein-arginine-phosphatase YwlE in vivo. Requires McsA for full kinase activity. Functionally, catalyzes the specific phosphorylation of arginine residues in a large number of proteins. Is part of the bacterial stress response system, where it is involved in regulating the global heat shock repressor CtsR; phosphorylates arginine residues in the winged helix-turn-helix domain of CtsR, thereby preventing its binding to DNA and consequently inducing the expression of repressed genes. The transcriptional repressor HrcA, the chaperone GroEL, the unfoldase ClpC, together with several ribosomal subunits, represent other physiological targets of McsB under stress conditions. Protein arginine phosphorylation has a physiologically important role and is involved in the regulation of many critical cellular processes, such as protein homeostasis, motility, competence, and stringent and stress responses, by regulating gene expression and protein activity. Functions as an adapter whose kinase activity is required for ClpCP-mediated degradation of CtsR during heat stress. Is required for the delocalization of competence proteins from the cell poles, probably via a role in the degradation of anchor proteins. This Bacillus subtilis (strain 168) protein is Protein-arginine kinase.